The sequence spans 205 residues: Heme ligase (205 aa).

In terms of domain architecture, FAS1 spans 48–203; it reads KRTIINLIYS…GVVHIVDKPI (156 aa). The segment at 154–172 is required for binding to host hemoglobin; it reads LRNLLNNDLIVKIEGEFKH. 2 heme binding domain regions span residues 171-181 and 191-200; these read KHCNHSIYLNG and CHNGVVHIVD.

As to quaternary structure, component of the hemozoin formation complex (HFC) composed of falcipains FP2A and/or FP2B, plasmepsins PMII, PMIII/HAP and PMIV, heme detoxifying protein HDP and falcilysin FLN. The HFC complex is involved in hemoglobin degradation and detoxification of heme in the food vacuole during the asexual blood stage. Interacts with falcipain 2; the interaction is direct and enhances HDP catalytic activity. Interacts with host hemoglobin.

The protein localises to the vacuole. The protein resides in the host cytoplasm. It is found in the host cytosol. It carries out the reaction 2 Fe(III)-heme b = beta-hematin. In terms of biological role, heme detoxifying enzyme that converts heme to crystalline hemozoin (beta-hematin) to protect the organism from the toxic effects of heme. During its development, P.falciparum proteolyzes vast amounts of host hemoglobin, leading to heme release. In Plasmodium falciparum (isolate 3D7), this protein is Heme ligase.